A 109-amino-acid polypeptide reads, in one-letter code: Class I hydrophobin 7 (109 aa).

Positions 1 to 17 (MFAQSFIITALAALAVA) are cleaved as a signal peptide. Intrachain disulfides connect C28–C88, C35–C82, C36–C69, and C89–C102.

Belongs to the fungal hydrophobin family. As to quaternary structure, self-assembles to form functional amyloid fibrils called rodlets. Self-assembly into fibrillar rodlets occurs spontaneously at hydrophobic:hydrophilic interfaces and the rodlets further associate laterally to form amphipathic monolayers.

It is found in the secreted. Its subcellular location is the cell wall. In terms of biological role, aerial growth, conidiation, and dispersal of filamentous fungi in the environment rely upon a capability of their secreting small amphipathic proteins called hydrophobins (HPBs) with low sequence identity. Class I can self-assemble into an outermost layer of rodlet bundles on aerial cell surfaces, conferring cellular hydrophobicity that supports fungal growth, development and dispersal; whereas Class II form highly ordered films at water-air interfaces through intermolecular interactions but contribute nothing to the rodlet structure. Hydph7 is a class I hydrophobin involved in fruiting body development. This Pleurotus ostreatus (strain PC15) (Oyster mushroom) protein is Class I hydrophobin 7.